A 259-amino-acid chain; its full sequence is Type-2Aa cytolytic delta-endotoxin (259 aa).

This sequence belongs to the cyt1/cyt2 endotoxin family. In terms of assembly, homodimer (protoxin) and monomer (active toxin). Post-translationally, active after proteolytic processing.

Functionally, kills the larvae of dipteran insects by making pores in the epithelial cell membrane of the insect midgut. This chain is Type-2Aa cytolytic delta-endotoxin (cyt2Aa1), found in Bacillus thuringiensis subsp. kyushuensis.